Here is an 807-residue protein sequence, read N- to C-terminus: Sucrose synthase 1 (807 aa).

Residues 272–748 form a GT-B glycosyltransferase region; it reads MMFNVVILSP…GLKRIYEKYT (477 aa).

This sequence belongs to the glycosyltransferase 1 family. Plant sucrose synthase subfamily. Forms homotetramers. In endosperm it forms both homotetramers and heterotetramers with SS2, all three possible heterotetramers are formed. As to expression, highly expressed in developing endosperm and in roots and, at lower levels, in coleoptiles and aleurone. In 3 day old roots it is detected in cap cells and along the vascular strand, starting just after the meristemic region. In 9 day old leaves it is found in the phloem. In seeds it is distributed throughout the endosperm and also found in the assimilate-unloading tissues, the nucellar projection, the vascular area and at a high concentration in the chalazal region.

It catalyses the reaction an NDP-alpha-D-glucose + D-fructose = a ribonucleoside 5'-diphosphate + sucrose + H(+). Sucrose-cleaving enzyme that provides UDP-glucose and fructose for various metabolic pathways. This Hordeum vulgare (Barley) protein is Sucrose synthase 1 (SS1).